The following is a 221-amino-acid chain: uncharacterized protein (221 aa).

Over 1 to 45 (MYAPIRSPITELNESTPSSIPVATSYATCSASFAKLVALLVDDMA) the chain is Extracellular. The helical transmembrane segment at 46–66 (GLSIVLSEIYIYFKLLFLIVI) threads the bilayer. Topologically, residues 67–221 (TESIQNKLED…KYIVVIKVEQ (155 aa)) are cytoplasmic.

The protein resides in the host membrane. This is an uncharacterized protein from Acidianus filamentous virus 1 (isolate United States/Yellowstone) (AFV-1).